The following is a 62-amino-acid chain: MEWKTCSFCEGKIEPGCGKKYVKKDGSVMQFCSSKCEKNFKLGRVGRKLKWTNMFKRMNKGQ.

Residues C6, C9, C32, and C36 each contribute to the Zn(2+) site. The segment at 6–36 adopts a C4-type zinc-finger fold; it reads CSFCEGKIEPGCGKKYVKKDGSVMQFCSSKC.

It belongs to the eukaryotic ribosomal protein eL24 family. As to quaternary structure, part of the 50S ribosomal subunit. Forms a cluster with proteins L3 and L14. Zn(2+) is required as a cofactor.

Its function is as follows. Binds to the 23S rRNA. The polypeptide is Large ribosomal subunit protein eL24 (Methanococcus vannielii (strain ATCC 35089 / DSM 1224 / JCM 13029 / OCM 148 / SB)).